Reading from the N-terminus, the 224-residue chain is Coiled-coil domain-containing protein 43 (224 aa).

Lys95 participates in a covalent cross-link: Glycyl lysine isopeptide (Lys-Gly) (interchain with G-Cter in SUMO1). 2 coiled-coil regions span residues 121 to 145 (SEEE…EDEA) and 177 to 218 (RKLE…KRTQ). Residues 138–149 (VTDEEDEADEKD) are compositionally biased toward acidic residues. Disordered regions lie at residues 138-157 (VTDE…TTMN) and 176-224 (ARKL…ERKR). Position 139 is a phosphothreonine (Thr139). The span at 176–211 (ARKLERDSLRDESQRKKEQDKLQRERDKLAKQERKE) shows a compositional bias: basic and acidic residues. Residues 212–224 (KEKKRTQRGERKR) are compositionally biased toward basic residues.

This sequence belongs to the CCDC43 family.

This chain is Coiled-coil domain-containing protein 43 (CCDC43), found in Homo sapiens (Human).